Reading from the N-terminus, the 873-residue chain is Kinase suppressor of Ras 1 (873 aa).

3 disordered regions span residues 1 to 24 (MDRA…GAAA), 174 to 230 (EHKM…PGLS), and 251 to 281 (LHSF…PSRK). The segment at 1-170 (MDRAALRAAA…ALTCLRKVTG (170 aa)) is mediates association with membranes. Residues 206-216 (ASTQGPRSISV) show a composition bias toward polar residues. Thr-256 and Thr-260 each carry phosphothreonine. Residue Ser-297 is modified to Phosphoserine; by MARK3. Ser-320 is subject to Phosphoserine. Residues 333–377 (THRFSTKSWLSQVCNVCQKSMIFGVKCKHCRLKCHNKCTKEAPAC) form a Phorbol-ester/DAG-type zinc finger. His-334 lines the Zn(2+) pocket. Ser-337 bears the Phosphoserine mark. Residues Cys-346, Cys-349, Cys-359, Cys-362, His-367, Cys-370, and Cys-377 each coordinate Zn(2+). Residue Ser-392 is modified to Phosphoserine; by MARK3. Phosphothreonine is present on Thr-411. Disordered regions lie at residues 416–473 (LTKK…RFSF) and 506–544 (HEAE…PISR). The span at 429–458 (SSSNPSSTTSSTPSSPAPFLTSSNPSSATT) shows a compositional bias: low complexity. Basic and acidic residues predominate over residues 506–519 (HEAEAEEPEAGKSE). A Phosphoserine modification is found at Ser-518. Residues 520–530 (AEDDEEDEVDD) are compositionally biased toward acidic residues. The Protein kinase domain occupies 563-833 (VELGEPIGQG…MDMLERLPKL (271 aa)). An ATP-binding site is contributed by 569–577 (IGQGRWGRV). The active-site Proton acceptor is Asp-683. Residues Lys-685 and Asp-700 each coordinate ATP. Ser-838 bears the Phosphoserine mark.

The protein belongs to the protein kinase superfamily. TKL Ser/Thr protein kinase family. In terms of assembly, homodimer. Heterodimerizes (via N-terminus) with BRAF (via N-terminus) in a MAP2K1/MEK1 or MAP2K2/MEK2-dependent manner. Interacts with MAP2K1/MEK1 and MAP2K2/MEK2. Binding to MAP2K1/MEK1 releases the intramolecular inhibitory interaction between KSR1 N-terminus and kinase domains which is required for the subsequent RSK1 dimerization with BRAF. Identified in a complex with AKAP13, MAP2K1 and BRAF. Interacts with AKAP13 and BRAF. Interacts with RAF and MAPK/ERK, in a Ras-dependent manner. Interacts with 14-3-3 proteins including YWHAB. Interacts with HSP90AA1/HSP90, YWHAE/14-3-3 and CDC37. The binding of 14-3-3 proteins to phosphorylated KSR1 prevents the membrane localization. Interacts with MARK3/C-TAK1. Interacts with PPP2R1A and PPP2CA. Interacts with VRK2. Phosphorylated on Ser-297 and, to a higher extent, on Ser-392 by MARK3. Dephosphorylated on Ser-392 by PPP2CA. Phosphorylated KSR1 is cytoplasmic and dephosphorylated KSR1 is membrane-associated. Phosphorylated by PKA at Ser-838. Phosphorylation at Ser-838 is required for cAMP-dependent activation of MAPK1 and/or MAPK3. As to expression, expressed in brain, spleen and testis. Isoform 1 is highly expressed spleen and weakly in testis, and isoform 2 is highly expressed in brain and weakly in testis.

Its subcellular location is the cytoplasm. It is found in the membrane. The protein localises to the cell membrane. The protein resides in the cell projection. It localises to the ruffle membrane. Its subcellular location is the endoplasmic reticulum membrane. The enzyme catalyses L-seryl-[protein] + ATP = O-phospho-L-seryl-[protein] + ADP + H(+). The catalysed reaction is L-threonyl-[protein] + ATP = O-phospho-L-threonyl-[protein] + ADP + H(+). In terms of biological role, part of a multiprotein signaling complex which promotes phosphorylation of Raf family members and activation of downstream MAP kinases. Independently of its kinase activity, acts as MAP2K1/MEK1 and MAP2K2/MEK2-dependent allosteric activator of BRAF; upon binding to MAP2K1/MEK1 or MAP2K2/MEK2, dimerizes with BRAF and promotes BRAF-mediated phosphorylation of MAP2K1/MEK1 and/or MAP2K2/MEK2. Promotes activation of MAPK1 and/or MAPK3, both in response to EGF and to cAMP. Its kinase activity is unsure. Some protein kinase activity has been detected in vitro, however the physiological relevance of this activity is unknown. This chain is Kinase suppressor of Ras 1 (Ksr1), found in Mus musculus (Mouse).